Consider the following 275-residue polypeptide: 3-methyl-2-oxobutanoate hydroxymethyltransferase (275 aa).

Residues Asp44 and Asp83 each contribute to the Mg(2+) site. Residues 44–45, Asp83, and Lys113 contribute to the 3-methyl-2-oxobutanoate site; that span reads DS. Glu115 provides a ligand contact to Mg(2+). The active-site Proton acceptor is Glu182.

Belongs to the PanB family. Homodecamer; pentamer of dimers. It depends on Mg(2+) as a cofactor.

The protein resides in the cytoplasm. The enzyme catalyses 3-methyl-2-oxobutanoate + (6R)-5,10-methylene-5,6,7,8-tetrahydrofolate + H2O = 2-dehydropantoate + (6S)-5,6,7,8-tetrahydrofolate. Its pathway is cofactor biosynthesis; (R)-pantothenate biosynthesis; (R)-pantoate from 3-methyl-2-oxobutanoate: step 1/2. Catalyzes the reversible reaction in which hydroxymethyl group from 5,10-methylenetetrahydrofolate is transferred onto alpha-ketoisovalerate to form ketopantoate. The chain is 3-methyl-2-oxobutanoate hydroxymethyltransferase from Clostridium botulinum (strain Loch Maree / Type A3).